An 809-amino-acid polypeptide reads, in one-letter code: Origin of replication complex subunit 1A (809 aa).

A compositionally biased stretch (low complexity) spans 1–47; sequence MASSLSSKAKTFKSPTKTPTKMYRKSYLSPSSTSLTPPQTPETLTPL. A disordered region spans residues 1 to 69; sequence MASSLSSKAK…LGNDPIDLPG (69 aa). The interval 160–185 is histone H3 binding; that stretch reads DPEIEDCQICFKSHTNTIMIECDDCL. Residues 163-213 form a PHD-type zinc finger; sequence IEDCQICFKSHTNTIMIECDDCLGGFHLNCLKPPLKEVPEGDWICQFCEVK. Residues C166, C169, C181, C184, H189, and C192 each contribute to the Zn(2+) site. Residues 201–205 form a histone H3 binding region; sequence PEGDW. Zn(2+) contacts are provided by C207 and C210. The 119-residue stretch at 223–341 folds into the BAH domain; the sequence is PKPPEGKKLA…VHWGSFKRVA (119 aa). The tract at residues 316-321 is histone H3 binding; the sequence is ASNDGD. Residues 431-799 form a necessary and sufficient for ORC complex assembly region; that stretch reads PKSLPCRSKE…DDVAFALKDN (369 aa). Residues 466–473 and 466–474 contribute to the ATP site; these read GVPGTGKT and GVPGTGKTI. Residues D556 and E557 each coordinate Mg(2+). ATP contacts are provided by E557, N590, and R655.

The protein belongs to the ORC1 family. Component of the origin recognition complex (ORC) composed of at least ORC1 (ORC1A or ORC1B), ORC2, ORC3, ORC4, ORC5 and ORC6. ORC is regulated in a cell-cycle and development dependent manner. It is sequentially assembled at the exit from anaphase of mitosis and disassembled as cells enter S phase. Interacts directly with ORC2, ORC3, ORC4 and ORC5. Binds mostly unmodified histone H3, and, with lower efficiency, H3K4me1 H3K4me2 and H3K4me3. As to expression, follow a cell-cycle regulation with a peak at the G1/S-phase. Mostly expressed in siliques, flowers and flower buds, and, to a lower extent, in roots, leaves and stems.

The protein localises to the nucleus. Its function is as follows. Essential protein. Component of the origin recognition complex (ORC) that binds origins of replication. It has a role in both chromosomal replication and mating type transcriptional silencing. Binds to the ARS consensus sequence (ACS) of origins of replication. H3K4me3 effector that positively regulates the transcription of a subset of genes. In Arabidopsis thaliana (Mouse-ear cress), this protein is Origin of replication complex subunit 1A.